Reading from the N-terminus, the 436-residue chain is Alpha-galactosidase mel1 (436 aa).

Residues 1–24 (MISISFLNCFFLVFLFLFFSDVHG) form the signal peptide. The cysteines at positions 45 and 77 are disulfide-linked. N-linked (GlcNAc...) asparagine glycosylation occurs at Asn84. Cys126 and Cys156 are oxidised to a cystine. Asp154 (nucleophile) is an active-site residue. An N-linked (GlcNAc...) asparagine glycan is attached at Asn180. Asp214 serves as the catalytic Proton donor.

The protein belongs to the glycosyl hydrolase 27 family.

The protein resides in the endoplasmic reticulum lumen. It is found in the secreted. It carries out the reaction Hydrolysis of terminal, non-reducing alpha-D-galactose residues in alpha-D-galactosides, including galactose oligosaccharides, galactomannans and galactolipids.. In terms of biological role, secreted alpha-galactosidase required for catabolic conversion of melibiose to glucose and galactose. The sequence is that of Alpha-galactosidase mel1 (mel1) from Schizosaccharomyces pombe (strain 972 / ATCC 24843) (Fission yeast).